The chain runs to 514 residues: Prolyl 3,4-dihydroxylase OGFOD1 (514 aa).

A Fe2OG dioxygenase domain is found at 114–221; it reads GAVDCSCNIY…RVSISGWFHT (108 aa). Fe cation is bound by residues His-132 and Asp-134. Tyr-146 contacts 2-oxoglutarate. Residue His-200 participates in Fe cation binding. Arg-212 lines the 2-oxoglutarate pocket.

This sequence belongs to the TPA1 family. Monomer and homodimer. The cofactor is Fe(2+). It depends on L-ascorbate as a cofactor.

It carries out the reaction [ribosomal protein uS12]-L-proline + 2-oxoglutarate + O2 = [ribosomal protein uS12]-(3S)-3-hydroxy-L-proline + succinate + CO2. It catalyses the reaction [ribosomal protein uS12]-(3S)-3-hydroxy-L-proline + 2-oxoglutarate + O2 = [ribosomal protein uS12]-(3S)-3,4-dihydroxy-L-proline + succinate + CO2. Functionally, prolyl 3,4-dihydroxylase that catalyzes 3,4-dihydroxylation of 'Pro-61' of small ribosomal subunit uS12 (RPS23), thereby regulating protein translation termination efficiency. This Ostreococcus tauri protein is Prolyl 3,4-dihydroxylase OGFOD1 (Ogd).